The sequence spans 526 residues: uncharacterized protein (526 aa).

WD repeat units lie at residues 210 to 248 (SMEQ…HHDT) and 452 to 491 (SHNS…LIDS).

This is an uncharacterized protein from Acanthamoeba polyphaga mimivirus (APMV).